Here is a 32-residue protein sequence, read N- to C-terminus: Variegin (32 aa).

Positions 1 to 32 (SDQGDVAEPKMHKTAPPFDFEAIPEEYLDDES) are disordered. Positions 8–14 (EPKMHKT) are contains the active site. The O-linked (Hex) threonine glycan is linked to threonine 14. A compositionally biased stretch (acidic residues) spans 22 to 32 (AIPEEYLDDES).

In terms of assembly, interacts with human F2 (thrombin); the interaction results in thrombin inhibition.

The protein resides in the secreted. Thrombin inhibitor. Does not inhibit other serine proteases. This chain is Variegin, found in Amblyomma variegatum (Tropical bont tick).